We begin with the raw amino-acid sequence, 129 residues long: N16.5 matrix protein (129 aa).

The signal sequence occupies residues 1-23 (MTCTLRWTITALVLLGICHLARP). Tandem repeats lie at residues 91-92 (NG), 93-94 (NG), 95-96 (NG), 97-98 (NG), and 99-100 (NG). The segment at 91 to 100 (NGNGNGNGNG) is 5 X 2 AA tandem repeats of N-G.

This sequence belongs to the N16 matrix protein family. In terms of assembly, heterooligomer; disulfide-linked. Pif97, Pif80, N16 and other proteins form a complex. In terms of tissue distribution, component of conchiolin, the organic matrix of nacre. Specifically expressed in mantle epithelium.

It localises to the secreted. It is found in the extracellular space. The protein resides in the extracellular matrix. May be specifically involved in the formation of the nacreous layer. The chain is N16.5 matrix protein from Pinctada fucata (Akoya pearl oyster).